We begin with the raw amino-acid sequence, 59 residues long: Large ribosomal subunit protein bL35 (59 aa).

The segment covering 17-43 (GQIKRKHAYTSHLAPHKSTKQKRHLRK) has biased composition (basic residues). Positions 17-47 (GQIKRKHAYTSHLAPHKSTKQKRHLRKQATV) are disordered.

Belongs to the bacterial ribosomal protein bL35 family.

The sequence is that of Large ribosomal subunit protein bL35 from Mycoplasma genitalium (strain ATCC 33530 / DSM 19775 / NCTC 10195 / G37) (Mycoplasmoides genitalium).